Here is a 215-residue protein sequence, read N- to C-terminus: UPF0502 protein YceH (215 aa).

The protein belongs to the UPF0502 family.

The chain is UPF0502 protein YceH from Salmonella paratyphi B (strain ATCC BAA-1250 / SPB7).